The sequence spans 538 residues: Dolichol kinase (538 aa).

Residues 1–18 (MTRECAPPTPGSGAPLSG) are Lumenal-facing. The helical transmembrane segment at 19–39 (SVLAEAAVVFVVVLSIHAAVW) threads the bilayer. The Cytoplasmic segment spans residues 40–74 (DRYSWCAVALAVQAFYVQYKWDRLLQQGSAVFQFR). The chain crosses the membrane as a helical span at residues 75-95 (MSANSGLLPASVVMPLLGLVM). Topologically, residues 96 to 111 (KERCQAAGNPYFERFG) are lumenal. The helical transmembrane segment at 112 to 132 (IVVAATGMAVALFSSVLALGI) threads the bilayer. The Cytoplasmic segment spans residues 133-134 (TR). A helical membrane pass occupies residues 135-155 (PVPTNTCVISGLAGGVIIYIM). The Lumenal segment spans residues 156–163 (KHSLSVGE). Residues 164–184 (VIEVLEALLIFVYLNMILLYL) form a helical membrane-spanning segment. The Cytoplasmic segment spans residues 185–188 (LPRC). Residues 189–209 (FTPGEALLVLGGISFMLNQLI) form a helical membrane-spanning segment. Residues 210–224 (KRSLTVVESQGDPLD) are Lumenal-facing. A helical transmembrane segment spans residues 225–245 (FFLLVVVVGMVLMGIFFSTLF). Over 246-254 (VFMDSGTWA) the chain is Cytoplasmic. The helical transmembrane segment at 255–275 (SSIFFHLMTCVLGLGVVLPWL) threads the bilayer. The Lumenal segment spans residues 276–297 (HRLIRRNPLLWLFQFLFQTETR). The chain crosses the membrane as a helical span at residues 298–318 (VYLLAYWCLLATVACLVVLYQ). At 319 to 337 (NAKRSSSESKKHQAPTITR) the chain is on the cytoplasmic side. A helical transmembrane segment spans residues 338 to 354 (KYFHFIVVATYIPGIIL). The Lumenal portion of the chain corresponds to 355-359 (DRPLL). Residues 360 to 380 (YVAATVCLAVFIFLEYVRYFR) form a helical membrane-spanning segment. At 381-401 (IKPLGHTLRSLLSLFLDERDS) the chain is on the cytoplasmic side. The chain crosses the membrane as a helical span at residues 402-422 (GPLILTHIYLLLGMSLPIWLV). Topologically, residues 423–436 (PRPCTQKGSLGGAR) are lumenal. A helical transmembrane segment spans residues 437 to 457 (ALVPYAGVLAVGVGDTVASIF). Over 458–472 (GSTMGEIRWPGTKKT) the chain is Cytoplasmic. Residues 459-474 (STMGEIRWPGTKKTFE) form a CTP-binding region. The helical transmembrane segment at 473 to 493 (FEGTMTSIFAQIISVALILIF) threads the bilayer. Residues 494 to 495 (DS) are Lumenal-facing. Residues 496–516 (GVDLNYSYAWILGSISTVSLL) traverse the membrane as a helical segment. At 517 to 538 (EAYTTQIDNLLLPLYLLILLMA) the chain is on the cytoplasmic side.

It belongs to the polyprenol kinase family.

Its subcellular location is the endoplasmic reticulum membrane. It carries out the reaction a di-trans,poly-cis-dolichol + CTP = a di-trans,poly-cis-dolichyl phosphate + CDP + H(+). Its pathway is protein modification; protein glycosylation. In terms of biological role, catalyzes CTP-mediated phosphorylation of dolichol, the terminal step in de novo dolichyl monophosphate (Dol-P) biosynthesis. Dol-P is a lipid carrier essential for the synthesis of N-linked and O-linked oligosaccharides and for GPI anchors. This is Dolichol kinase (DOLK) from Bos taurus (Bovine).